The primary structure comprises 502 residues: RxLR effector protein BLN06 (502 aa).

Positions 1–20 (MTLLHCWLLLVGHLASTAYA) are cleaved as a signal peptide. N38 is a glycosylation site (N-linked (GlcNAc...) asparagine). The short motif at 50 to 53 (LEER) is the dEER element.

It belongs to the RxLR effector family.

It localises to the secreted. The protein resides in the host cell membrane. Its function is as follows. Secreted effector that triggers a robust hypersensitive response (HR) in Lactuca serriola LS102. The response to BLN06 was visible as chlorosis but not as strong necrosis. This is RxLR effector protein BLN06 from Bremia lactucae (Lettuce downy mildew).